The primary structure comprises 662 residues: ABC transporter G family member 17 (662 aa).

Residues 22–276 (LAFNDLTYNV…FSEFGSPIPE (255 aa)) enclose the ABC transporter domain. 69 to 76 (GASGAGKS) provides a ligand contact to ATP. Residues 356–566 (VETVILAKRY…PYEAVLHNEF (211 aa)) form the ABC transmembrane type-2 domain. 6 helical membrane passes run 375-395 (LIGT…TVYW), 410-430 (FFSF…PAFI), 451-471 (VISH…GFAA), 486-508 (FIYY…TFVS), 514-536 (VMMS…GFYV), and 635-655 (LWVT…SLLL).

This sequence belongs to the ABC transporter superfamily. ABCG family. Eye pigment precursor importer (TC 3.A.1.204) subfamily.

It localises to the membrane. This Arabidopsis thaliana (Mouse-ear cress) protein is ABC transporter G family member 17 (ABCG17).